We begin with the raw amino-acid sequence, 143 residues long: Putative protein FPV235 (143 aa).

This is Putative protein FPV235 from Vertebrata (FPV).